The primary structure comprises 1025 residues: Multidrug resistance protein MdtC (1025 aa).

12 helical membrane-spanning segments follow: residues 3–23, 333–353, 360–380, 387–407, 431–451, 463–483, 528–548, 853–873, 875–895, 897–917, 953–973, and 984–1004; these read FFAL…AITL, EVEQ…FLFL, IIPA…MYLC, LSLM…IVVL, VGFT…PLLL, FAVT…TLTP, LVGA…ISIP, VILI…LYES, VHPL…LLAL, LFNA…IGIV, PIMM…LSGG, and ITIV…TPVV.

Belongs to the resistance-nodulation-cell division (RND) (TC 2.A.6) family. MdtC subfamily. As to quaternary structure, part of a tripartite efflux system composed of MdtA, MdtB and MdtC. MdtC forms a heteromultimer with MdtB.

It is found in the cell inner membrane. Functionally, the MdtABC tripartite complex confers resistance against novobiocin and deoxycholate. This chain is Multidrug resistance protein MdtC, found in Escherichia coli O81 (strain ED1a).